Here is a 373-residue protein sequence, read N- to C-terminus: NADH-quinone oxidoreductase subunit D (373 aa).

This sequence belongs to the complex I 49 kDa subunit family. As to quaternary structure, NDH-1 is composed of 14 different subunits. Subunits NuoB, C, D, E, F, and G constitute the peripheral sector of the complex.

Its subcellular location is the cell inner membrane. The catalysed reaction is a quinone + NADH + 5 H(+)(in) = a quinol + NAD(+) + 4 H(+)(out). NDH-1 shuttles electrons from NADH, via FMN and iron-sulfur (Fe-S) centers, to quinones in the respiratory chain. The immediate electron acceptor for the enzyme in this species is believed to be ubiquinone. Couples the redox reaction to proton translocation (for every two electrons transferred, four hydrogen ions are translocated across the cytoplasmic membrane), and thus conserves the redox energy in a proton gradient. The polypeptide is NADH-quinone oxidoreductase subunit D (Syntrophobacter fumaroxidans (strain DSM 10017 / MPOB)).